A 393-amino-acid chain; its full sequence is Probable chromate transport protein (393 aa).

The next 10 helical transmembrane spans lie at 22 to 42 (YFLKLGALGFGGPIALVGYMH), 90 to 110 (ALVGLAFVLPSFLIVVALGWA), 119 to 139 (WMQAVFYGVGAAVIGIIAISA), 146 to 166 (TVGTSWLLWSIYLVNAATTIV), 201 to 221 (FIGLPLIPLFAAVPTATTSLL), 231 to 251 (AGAFVFGSGLAIVPFLYGGVV), 261 to 281 (QFLDAVAVAMITPGPVVITTG), 282 to 302 (FIGFLVAGFPGACVAAIAMFI), 327 to 347 (FVNGVTVAATGAIAGAVVVLG), and 370 to 390 (LGKKLPEPLIIVIAAIAGVIF).

It belongs to the chromate ion transporter (CHR) (TC 2.A.51) family.

It localises to the cell membrane. Functionally, may function in the active transport of chromate into the cell under sulfur-deficient conditions. This chain is Probable chromate transport protein (srpC), found in Synechococcus elongatus (strain ATCC 33912 / PCC 7942 / FACHB-805) (Anacystis nidulans R2).